Here is a 430-residue protein sequence, read N- to C-terminus: Ribosomal protein uS12 methylthiotransferase RimO (430 aa).

The region spanning 1-116 (MRVGIKVLGC…IANALEKGTD (116 aa)) is the MTTase N-terminal domain. [4Fe-4S] cluster-binding residues include C10, C46, C79, C148, C152, and C155. The region spanning 134-365 (LEERPYAYVK…LLQAEISNSR (232 aa)) is the Radical SAM core domain. One can recognise a TRAM domain in the interval 367–430 (DRFIGRKLKF…DEYDMWGSVT (64 aa)).

It belongs to the methylthiotransferase family. RimO subfamily. It depends on [4Fe-4S] cluster as a cofactor.

The protein resides in the cytoplasm. It carries out the reaction L-aspartate(89)-[ribosomal protein uS12]-hydrogen + (sulfur carrier)-SH + AH2 + 2 S-adenosyl-L-methionine = 3-methylsulfanyl-L-aspartate(89)-[ribosomal protein uS12]-hydrogen + (sulfur carrier)-H + 5'-deoxyadenosine + L-methionine + A + S-adenosyl-L-homocysteine + 2 H(+). Its function is as follows. Catalyzes the methylthiolation of an aspartic acid residue of ribosomal protein uS12. The protein is Ribosomal protein uS12 methylthiotransferase RimO of Thermotoga sp. (strain RQ2).